The chain runs to 433 residues: D-amino acid dehydrogenase (433 aa).

3–17 (VVILGSGVVGVASAW) is an FAD binding site.

The protein belongs to the DadA oxidoreductase family. FAD is required as a cofactor.

The catalysed reaction is a D-alpha-amino acid + A + H2O = a 2-oxocarboxylate + AH2 + NH4(+). It participates in amino-acid degradation; D-alanine degradation; NH(3) and pyruvate from D-alanine: step 1/1. In terms of biological role, oxidative deamination of D-amino acids. In Erwinia tasmaniensis (strain DSM 17950 / CFBP 7177 / CIP 109463 / NCPPB 4357 / Et1/99), this protein is D-amino acid dehydrogenase.